A 156-amino-acid chain; its full sequence is Small ribosomal subunit protein uS7 (156 aa).

The protein belongs to the universal ribosomal protein uS7 family. As to quaternary structure, part of the 30S ribosomal subunit. Contacts proteins S9 and S11.

One of the primary rRNA binding proteins, it binds directly to 16S rRNA where it nucleates assembly of the head domain of the 30S subunit. Is located at the subunit interface close to the decoding center, probably blocks exit of the E-site tRNA. In Psychromonas ingrahamii (strain DSM 17664 / CCUG 51855 / 37), this protein is Small ribosomal subunit protein uS7.